A 292-amino-acid chain; its full sequence is Short chain dehydrogenases/reductase notP' (292 aa).

Residues 1–25 (MPQTSDGNVHAPQYREAKPSQGDPS) form a disordered region. Leu48, Asp97, Lys158, Tyr193, Lys197, Ile230, and Thr232 together coordinate NADP(+). Catalysis depends on Tyr193, which acts as the Proton donor. The active-site Lowers pKa of active site Tyr is the Lys197.

The protein belongs to the short-chain dehydrogenases/reductases (SDR) family.

In terms of biological role, short chain dehydrogenases/reductase; part of the gene cluster that mediates the biosynthesis of notoamide, a fungal indole alkaloid that belongs to a family of natural products containing a characteristic bicyclo[2.2.2]diazaoctane core. The first step of notoamide biosynthesis involves coupling of L-proline and L-tryptophan by the bimodular NRPS notE', to produce cyclo-L-tryptophan-L-proline called brevianamide F. The reverse prenyltransferase notF' then acts as a deoxybrevianamide E synthase and converts brevianamide F to deoxybrevianamide E via reverse prenylation at C-2 of the indole ring leading to the bicyclo[2.2.2]diazaoctane core. Deoxybrevianamide E is further hydroxylated at C-6 of the indole ring, likely catalyzed by the cytochrome P450 monooxygenase notG', to yield 6-hydroxy-deoxybrevianamide E. 6-hydroxy-deoxybrevianamide E is a specific substrate of the prenyltransferase notC' for normal prenylation at C-7 to produce 6-hydroxy-7-prenyl-deoxybrevianamide, also called notoamide S. As the proposed pivotal branching point in notoamide biosynthesis, notoamide S can be diverted to notoamide E through an oxidative pyran ring closure putatively catalyzed by either notH' cytochrome P450 monooxygenase or the notD' FAD-linked oxidoreductase. This step would be followed by an indole 2,3-epoxidation-initiated pinacol-like rearrangement catalyzed by the notB' FAD-dependent monooxygenase leading to the formation of notoamide C and notoamide D. On the other hand notoamide S is converted to notoamide T by notH' (or notD'), a bifunctional oxidase that also functions as the intramolecular Diels-Alderase responsible for generation of (-)-notoamide T. To generate antipodal (+)-notoaminide T, notH (or notD) in Aspergillus strain MF297-2 is expected to catalyze a Diels-Alder reaction leading to the opposite stereochemistry. The remaining oxidoreductase notD' (or notH') likely catalyzes the oxidative pyran ring formation to yield (-)-stephacidin A. The FAD-dependent monooxygenase notI' is highly similar to notB' and is predicted to catalyze a similar conversion from (-)-stephacidin A to (+)-notoamide B via the 2,3-epoxidation of (-)-stephacidin A followed by a pinacol-type rearrangement. Finally, it remains unclear which enzyme could be responsible for the final hydroxylation steps leading to notoamide A and sclerotiamide. The function of notP' in the notoamide biosynthesis has not been determined yet. This Aspergillus versicolor protein is Short chain dehydrogenases/reductase notP'.